The following is a 425-amino-acid chain: Isocitrate dehydrogenase [NADP] (425 aa).

Residue Thr114 participates in NADP(+) binding. Ser123, Asn125, Arg129, Arg139, and Arg162 together coordinate D-threo-isocitrate. Asp316 lines the Mg(2+) pocket. Residues His348–Tyr354, Asn361, Tyr400, and Arg404 each bind NADP(+).

This sequence belongs to the isocitrate and isopropylmalate dehydrogenases family. In terms of assembly, homodimer. Requires Mg(2+) as cofactor. The cofactor is Mn(2+).

The catalysed reaction is D-threo-isocitrate + NADP(+) = 2-oxoglutarate + CO2 + NADPH. Its function is as follows. Catalyzes the oxidative decarboxylation of isocitrate to 2-oxoglutarate and carbon dioxide with the concomitant reduction of NADP(+). The polypeptide is Isocitrate dehydrogenase [NADP] (icd) (Helicobacter pylori (strain ATCC 700392 / 26695) (Campylobacter pylori)).